The sequence spans 969 residues: Protein translocase subunit SecA (969 aa).

Residues Gln99, 117-121, and Asp631 each bind ATP; that span reads GEGKT.

Belongs to the SecA family. As to quaternary structure, monomer and homodimer. Part of the essential Sec protein translocation apparatus which comprises SecA, SecYEG and auxiliary proteins SecDF. Other proteins may also be involved.

It localises to the cell inner membrane. The protein localises to the cytoplasm. It catalyses the reaction ATP + H2O + cellular proteinSide 1 = ADP + phosphate + cellular proteinSide 2.. In terms of biological role, part of the Sec protein translocase complex. Interacts with the SecYEG preprotein conducting channel. Has a central role in coupling the hydrolysis of ATP to the transfer of proteins into and across the cell membrane, serving as an ATP-driven molecular motor driving the stepwise translocation of polypeptide chains across the membrane. In Chlamydia trachomatis serovar A (strain ATCC VR-571B / DSM 19440 / HAR-13), this protein is Protein translocase subunit SecA.